The chain runs to 550 residues: Chaperonin GroEL 1 (550 aa).

ATP is bound by residues 30–33 (TLGP), Lys-51, 87–91 (DGTTT), Gly-415, and Asp-496.

It belongs to the chaperonin (HSP60) family. In terms of assembly, forms a cylinder of 14 subunits composed of two heptameric rings stacked back-to-back. Interacts with the co-chaperonin GroES.

The protein localises to the cytoplasm. The catalysed reaction is ATP + H2O + a folded polypeptide = ADP + phosphate + an unfolded polypeptide.. Together with its co-chaperonin GroES, plays an essential role in assisting protein folding. The GroEL-GroES system forms a nano-cage that allows encapsulation of the non-native substrate proteins and provides a physical environment optimized to promote and accelerate protein folding. This is Chaperonin GroEL 1 from Rhodopseudomonas palustris (strain HaA2).